The primary structure comprises 146 residues: Holo-[acyl-carrier-protein] synthase (146 aa).

The Mg(2+) site is built by Asp-8 and Glu-61.

The protein belongs to the P-Pant transferase superfamily. AcpS family. Requires Mg(2+) as cofactor.

The protein localises to the cytoplasm. It carries out the reaction apo-[ACP] + CoA = holo-[ACP] + adenosine 3',5'-bisphosphate + H(+). Its function is as follows. Transfers the 4'-phosphopantetheine moiety from coenzyme A to a Ser of acyl-carrier-protein. The chain is Holo-[acyl-carrier-protein] synthase from Rhodopseudomonas palustris (strain ATCC BAA-98 / CGA009).